A 147-amino-acid chain; its full sequence is UPF0306 protein KPN78578_35330 (147 aa).

This sequence belongs to the UPF0306 family.

The chain is UPF0306 protein KPN78578_35330 from Klebsiella pneumoniae subsp. pneumoniae (strain ATCC 700721 / MGH 78578).